A 379-amino-acid polypeptide reads, in one-letter code: Tryptophan 2,3-dioxygenase (379 aa).

Substrate is bound by residues 57-61 (FIITH) and arginine 128. A heme-binding site is contributed by histidine 312. Residue threonine 327 participates in substrate binding.

Belongs to the tryptophan 2,3-dioxygenase family. In terms of assembly, homotetramer. Dimer of dimers. The cofactor is heme.

The catalysed reaction is L-tryptophan + O2 = N-formyl-L-kynurenine. The protein operates within amino-acid degradation; L-tryptophan degradation via kynurenine pathway; L-kynurenine from L-tryptophan: step 1/2. It functions in the pathway pigment biosynthesis; ommochrome biosynthesis. In terms of biological role, heme-dependent dioxygenase that catalyzes the oxidative cleavage of the L-tryptophan (L-Trp) pyrrole ring and converts L-tryptophan to N-formyl-L-kynurenine. Catalyzes the oxidative cleavage of the indole moiety. The protein is Tryptophan 2,3-dioxygenase of Drosophila yakuba (Fruit fly).